A 78-amino-acid chain; its full sequence is Protein Vpr (78 aa).

A homooligomerization region spans residues 1–42; sequence MEQAPEDQGPQRKPHNEWTLELLEELKNEAVRHFPRIWLHGL.

It belongs to the HIV-1 VPR protein family. Homooligomer, may form homodimer. Interacts with p6-gag region of the Pr55 Gag precursor protein through a (Leu-X-X)4 motif near the C-terminus of the P6gag protein. Interacts with host UNG. May interact with host RAD23A/HHR23A. Interacts with host VPRBP/DCAF1, leading to hijack the CUL4A-RBX1-DDB1-DCAF1/VPRBP complex, mediating ubiquitination of host proteins such as TERT and ZGPAT and arrest of the cell cycle in G2 phase. Phosphorylated on several residues by host. These phosphorylations regulate VPR activity for the nuclear import of the HIV-1 pre-integration complex.

Its subcellular location is the virion. It localises to the host nucleus. It is found in the host extracellular space. Its function is as follows. During virus replication, may deplete host UNG protein, and incude G2-M cell cycle arrest. Acts by targeting specific host proteins for degradation by the 26S proteasome, through association with the cellular CUL4A-DDB1 E3 ligase complex by direct interaction with host VPRPB/DCAF-1. Cell cycle arrest reportedly occurs within hours of infection and is not blocked by antiviral agents, suggesting that it is initiated by the VPR carried into the virion. Additionally, VPR induces apoptosis in a cell cycle dependent manner suggesting that these two effects are mechanistically linked. Detected in the serum and cerebrospinal fluid of AIDS patient, VPR may also induce cell death to bystander cells. During virus entry, plays a role in the transport of the viral pre-integration (PIC) complex to the host nucleus. This function is crucial for viral infection of non-dividing macrophages. May act directly at the nuclear pore complex, by binding nucleoporins phenylalanine-glycine (FG)-repeat regions. This chain is Protein Vpr, found in Homo sapiens (Human).